The primary structure comprises 456 residues: tRNA modification GTPase MnmE (456 aa).

The (6S)-5-formyl-5,6,7,8-tetrahydrofolate site is built by Arg-25, Glu-82, and Lys-121. In terms of domain architecture, TrmE-type G spans 217 to 379 (GMKVVIAGRP…LKAHLKSVMG (163 aa)). Asn-227 is a K(+) binding site. Residues 227–232 (NAGKSS), 246–252 (TNIAGTT), and 271–274 (DTAG) each bind GTP. Position 231 (Ser-231) interacts with Mg(2+). Positions 246, 248, and 251 each coordinate K(+). Thr-252 contacts Mg(2+). Lys-456 contributes to the (6S)-5-formyl-5,6,7,8-tetrahydrofolate binding site.

The protein belongs to the TRAFAC class TrmE-Era-EngA-EngB-Septin-like GTPase superfamily. TrmE GTPase family. As to quaternary structure, homodimer. Heterotetramer of two MnmE and two MnmG subunits. It depends on K(+) as a cofactor.

The protein resides in the cytoplasm. Its function is as follows. Exhibits a very high intrinsic GTPase hydrolysis rate. Involved in the addition of a carboxymethylaminomethyl (cmnm) group at the wobble position (U34) of certain tRNAs, forming tRNA-cmnm(5)s(2)U34. This is tRNA modification GTPase MnmE from Saccharophagus degradans (strain 2-40 / ATCC 43961 / DSM 17024).